The following is a 565-amino-acid chain: uncharacterized protein (565 aa).

13 helical membrane passes run 8–28, 43–63, 95–115, 137–157, 167–187, 227–247, 268–288, 314–334, 367–387, 424–444, 460–480, 482–502, and 516–536; these read ISFIAAMLIVIGSSIGAGIFF, LAIFNWLVASVAVIAMALALI, MTYLYLPLTFFFMPLYFICSI, WLIWLALALIITTYFLTIPPL, MVVSAVKFIPLVFVPIIGFIV, FTGIGAGMGSFISIAAIFFAY, WALFLGLLITTLFYLILAVAL, IVFGVVNLMIGIGVLGIINGF, VVGVIYCLVLSLTVQVLFTVI, ATWTSLFTFAFIACAIFGAIV, FLPAAWIAVVVNCISVFVTII, PFINLFLLFGYDETVAHTVLG, and VMLIVVLVFFAIISFLPVYVE.

This sequence to M.pneumoniae MPN_095 and MPN_096.

The protein localises to the cell membrane. This is an uncharacterized protein from Mycoplasma pneumoniae (strain ATCC 29342 / M129 / Subtype 1) (Mycoplasmoides pneumoniae).